The primary structure comprises 111 residues: Cell division protein FtsB (111 aa).

The Cytoplasmic segment spans residues 1 to 3; that stretch reads MGK. A helical transmembrane segment spans residues 4–21; sequence LTLLLLILLGWLQYSLWL. Over 22 to 111 the chain is Periplasmic; sequence GKNGIHDYVR…TNTSSNNTQR (90 aa). The stretch at 33–63 forms a coiled coil; that stretch reads KDDVVVQQGNNAKLKDRNEQLFAEIDDLNGG. A disordered region spans residues 88 to 111; the sequence is VPESNHRNANTPSSTNTSSNNTQR. A compositionally biased stretch (low complexity) spans 97 to 111; that stretch reads NTPSSTNTSSNNTQR.

The protein belongs to the FtsB family. Part of a complex composed of FtsB, FtsL and FtsQ.

It localises to the cell inner membrane. Essential cell division protein. May link together the upstream cell division proteins, which are predominantly cytoplasmic, with the downstream cell division proteins, which are predominantly periplasmic. This chain is Cell division protein FtsB, found in Pectobacterium atrosepticum (strain SCRI 1043 / ATCC BAA-672) (Erwinia carotovora subsp. atroseptica).